We begin with the raw amino-acid sequence, 99 residues long: NADH-quinone oxidoreductase subunit K (99 aa).

3 consecutive transmembrane segments (helical) span residues 3–23 (PENYLYLSALLFTIGAAGVLI), 28–48 (IIVFMCIELMLNASNLAFVTF), and 59–79 (VFAFFTMVVAAAEVVVGLAII).

It belongs to the complex I subunit 4L family. As to quaternary structure, NDH-1 is composed of 14 different subunits. Subunits NuoA, H, J, K, L, M, N constitute the membrane sector of the complex.

The protein resides in the cell membrane. It carries out the reaction a quinone + NADH + 5 H(+)(in) = a quinol + NAD(+) + 4 H(+)(out). Its function is as follows. NDH-1 shuttles electrons from NADH, via FMN and iron-sulfur (Fe-S) centers, to quinones in the respiratory chain. The immediate electron acceptor for the enzyme in this species is believed to be a menaquinone. Couples the redox reaction to proton translocation (for every two electrons transferred, four hydrogen ions are translocated across the cytoplasmic membrane), and thus conserves the redox energy in a proton gradient. The polypeptide is NADH-quinone oxidoreductase subunit K (Rhodococcus jostii (strain RHA1)).